A 227-amino-acid polypeptide reads, in one-letter code: Enolase-phosphatase E1 (227 aa).

The protein belongs to the HAD-like hydrolase superfamily. MasA/MtnC family. In terms of assembly, monomer. Mg(2+) serves as cofactor.

The catalysed reaction is 5-methylsulfanyl-2,3-dioxopentyl phosphate + H2O = 1,2-dihydroxy-5-(methylsulfanyl)pent-1-en-3-one + phosphate. It functions in the pathway amino-acid biosynthesis; L-methionine biosynthesis via salvage pathway; L-methionine from S-methyl-5-thio-alpha-D-ribose 1-phosphate: step 3/6. It participates in amino-acid biosynthesis; L-methionine biosynthesis via salvage pathway; L-methionine from S-methyl-5-thio-alpha-D-ribose 1-phosphate: step 4/6. In terms of biological role, bifunctional enzyme that catalyzes the enolization of 2,3-diketo-5-methylthiopentyl-1-phosphate (DK-MTP-1-P) into the intermediate 2-hydroxy-3-keto-5-methylthiopentenyl-1-phosphate (HK-MTPenyl-1-P), which is then dephosphorylated to form the acireductone 1,2-dihydroxy-3-keto-5-methylthiopentene (DHK-MTPene). In Azotobacter vinelandii (strain DJ / ATCC BAA-1303), this protein is Enolase-phosphatase E1.